Here is an 81-residue protein sequence, read N- to C-terminus: Photosystem I iron-sulfur center (81 aa).

2 4Fe-4S ferredoxin-type domains span residues 1–31 and 39–68; these read MAHS…MVPW and IASA…VRVY. Cys11, Cys14, Cys17, Cys21, Cys48, Cys51, Cys54, and Cys58 together coordinate [4Fe-4S] cluster.

In terms of assembly, the eukaryotic PSI reaction center is composed of at least 11 subunits. [4Fe-4S] cluster is required as a cofactor.

It localises to the plastid. It is found in the chloroplast thylakoid membrane. The catalysed reaction is reduced [plastocyanin] + hnu + oxidized [2Fe-2S]-[ferredoxin] = oxidized [plastocyanin] + reduced [2Fe-2S]-[ferredoxin]. Functionally, apoprotein for the two 4Fe-4S centers FA and FB of photosystem I (PSI); essential for photochemical activity. FB is the terminal electron acceptor of PSI, donating electrons to ferredoxin. The C-terminus interacts with PsaA/B/D and helps assemble the protein into the PSI complex. Required for binding of PsaD and PsaE to PSI. PSI is a plastocyanin-ferredoxin oxidoreductase, converting photonic excitation into a charge separation, which transfers an electron from the donor P700 chlorophyll pair to the spectroscopically characterized acceptors A0, A1, FX, FA and FB in turn. This is Photosystem I iron-sulfur center from Welwitschia mirabilis (Tree tumbo).